Here is a 185-residue protein sequence, read N- to C-terminus: Ribosome-recycling factor (185 aa).

Belongs to the RRF family.

The protein localises to the cytoplasm. Its function is as follows. Responsible for the release of ribosomes from messenger RNA at the termination of protein biosynthesis. May increase the efficiency of translation by recycling ribosomes from one round of translation to another. In Pseudomonas aeruginosa (strain LESB58), this protein is Ribosome-recycling factor.